A 171-amino-acid polypeptide reads, in one-letter code: 3-hydroxydecanoyl-[acyl-carrier-protein] dehydratase (171 aa).

Residue His70 is part of the active site.

The protein belongs to the thioester dehydratase family. FabA subfamily. In terms of assembly, homodimer.

The protein localises to the cytoplasm. It catalyses the reaction a (3R)-hydroxyacyl-[ACP] = a (2E)-enoyl-[ACP] + H2O. The catalysed reaction is (3R)-hydroxydecanoyl-[ACP] = (2E)-decenoyl-[ACP] + H2O. The enzyme catalyses (2E)-decenoyl-[ACP] = (3Z)-decenoyl-[ACP]. Its pathway is lipid metabolism; fatty acid biosynthesis. Necessary for the introduction of cis unsaturation into fatty acids. Catalyzes the dehydration of (3R)-3-hydroxydecanoyl-ACP to E-(2)-decenoyl-ACP and then its isomerization to Z-(3)-decenoyl-ACP. Can catalyze the dehydratase reaction for beta-hydroxyacyl-ACPs with saturated chain lengths up to 16:0, being most active on intermediate chain length. This chain is 3-hydroxydecanoyl-[acyl-carrier-protein] dehydratase, found in Azotobacter vinelandii (strain DJ / ATCC BAA-1303).